We begin with the raw amino-acid sequence, 294 residues long: Probable porphobilinogen deaminase (294 aa).

C233 carries the post-translational modification S-(dipyrrolylmethanemethyl)cysteine.

This sequence belongs to the HMBS family. It depends on dipyrromethane as a cofactor.

The enzyme catalyses 4 porphobilinogen + H2O = hydroxymethylbilane + 4 NH4(+). It functions in the pathway porphyrin-containing compound metabolism; protoporphyrin-IX biosynthesis; coproporphyrinogen-III from 5-aminolevulinate: step 2/4. Tetrapolymerization of the monopyrrole PBG into the hydroxymethylbilane pre-uroporphyrinogen in several discrete steps. The sequence is that of Probable porphobilinogen deaminase from Sulfurisphaera tokodaii (strain DSM 16993 / JCM 10545 / NBRC 100140 / 7) (Sulfolobus tokodaii).